A 135-amino-acid chain; its full sequence is NADPH-dependent 7-cyano-7-deazaguanine reductase (135 aa).

Catalysis depends on cysteine 48, which acts as the Thioimide intermediate. Aspartate 55 acts as the Proton donor in catalysis. Residues 70–72 (IEL) and 89–90 (HE) contribute to the substrate site.

It belongs to the GTP cyclohydrolase I family. QueF type 1 subfamily.

It is found in the cytoplasm. It carries out the reaction 7-aminomethyl-7-carbaguanine + 2 NADP(+) = 7-cyano-7-deazaguanine + 2 NADPH + 3 H(+). It participates in tRNA modification; tRNA-queuosine biosynthesis. In terms of biological role, catalyzes the NADPH-dependent reduction of 7-cyano-7-deazaguanine (preQ0) to 7-aminomethyl-7-deazaguanine (preQ1). The polypeptide is NADPH-dependent 7-cyano-7-deazaguanine reductase (Prochlorococcus marinus (strain MIT 9313)).